Here is a 265-residue protein sequence, read N- to C-terminus: Basic leucine zipper 6 (265 aa).

Disordered stretches follow at residues 1–24 and 77–139; these read MAQLPPKIPVAAPGHHQHWASAGG and LMSM…RDPK. Residues 85–97 are compositionally biased toward low complexity; that stretch reads GGSSAPGSDNGGS. A compositionally biased stretch (polar residues) spans 122-132; the sequence is TQEQAAATSPT. In terms of domain architecture, bZIP spans 137–189; sequence DPKRVKRILANRQSAQRSRVRKLQYISELERSVTTLQNEVSVLSPRVAFLDQQ. The segment at 139–158 is basic motif; the sequence is KRVKRILANRQSAQRSRVRK. The leucine-zipper stretch occupies residues 165–186; that stretch reads LERSVTTLQNEVSVLSPRVAFL. Residues 239–265 form a disordered region; it reads LSGGLAADHAHVHGGPPPVRAEKELMS.

Expressed in roots, shoots and panicles.

It localises to the nucleus. Functionally, transcription regulator. The polypeptide is Basic leucine zipper 6 (BZIP06) (Oryza sativa subsp. japonica (Rice)).